A 124-amino-acid chain; its full sequence is MAISKDDILEAVGNLTVLELNDLVKAFEEKFGVSAAAMAAPAAGGAAGGAAAEEQTEFTVVLADFGANKVGVIKAVREITGLGLKEAKDLVDAAPKPLKEGVSKADAEAAKKKLEEAGAKAEIK.

Belongs to the bacterial ribosomal protein bL12 family. As to quaternary structure, homodimer. Part of the ribosomal stalk of the 50S ribosomal subunit. Forms a multimeric L10(L12)X complex, where L10 forms an elongated spine to which 2 to 4 L12 dimers bind in a sequential fashion. Binds GTP-bound translation factors.

In terms of biological role, forms part of the ribosomal stalk which helps the ribosome interact with GTP-bound translation factors. Is thus essential for accurate translation. The polypeptide is Large ribosomal subunit protein bL12 (Janthinobacterium sp. (strain Marseille) (Minibacterium massiliensis)).